We begin with the raw amino-acid sequence, 600 residues long: Elongation factor 4 (600 aa).

Positions 5 to 187 constitute a tr-type G domain; the sequence is SHIRNFSIVA…ALVNRLPCPE (183 aa). GTP contacts are provided by residues 17-22 and 134-137; these read DHGKST and NKID.

This sequence belongs to the TRAFAC class translation factor GTPase superfamily. Classic translation factor GTPase family. LepA subfamily.

It localises to the cell inner membrane. It catalyses the reaction GTP + H2O = GDP + phosphate + H(+). In terms of biological role, required for accurate and efficient protein synthesis under certain stress conditions. May act as a fidelity factor of the translation reaction, by catalyzing a one-codon backward translocation of tRNAs on improperly translocated ribosomes. Back-translocation proceeds from a post-translocation (POST) complex to a pre-translocation (PRE) complex, thus giving elongation factor G a second chance to translocate the tRNAs correctly. Binds to ribosomes in a GTP-dependent manner. The polypeptide is Elongation factor 4 (Paramagnetospirillum magneticum (strain ATCC 700264 / AMB-1) (Magnetospirillum magneticum)).